A 1084-amino-acid polypeptide reads, in one-letter code: Carbamoyl phosphate synthase large chain (1084 aa).

The tract at residues 1–401 (MPRRQDVEKV…ALLKAVRSLE (401 aa)) is carboxyphosphate synthetic domain. Arg-129, Arg-169, Gly-175, Gly-176, Arg-208, Leu-210, Glu-215, Gly-241, Val-242, His-243, Gln-284, and Glu-298 together coordinate ATP. In terms of domain architecture, ATP-grasp 1 spans 133–327 (RALMKEIGEP…IAKVAAKIAV (195 aa)). Gln-284, Glu-298, and Asn-300 together coordinate Mg(2+). Mn(2+) is bound by residues Gln-284, Glu-298, and Asn-300. The oligomerization domain stretch occupies residues 402 to 546 (TGRDGLFHPA…YSCYDEENEA (145 aa)). Residues 547 to 947 (VSPPGRKAVV…ALYKALLASG (401 aa)) are carbamoyl phosphate synthetic domain. The region spanning 672 to 862 (DQLLSDLSIP…LAKVATQVIA (191 aa)) is the ATP-grasp 2 domain. ATP contacts are provided by Arg-708, Arg-747, Glu-753, Gly-778, Val-779, His-780, Ser-781, Gln-821, and Glu-833. Mg(2+)-binding residues include Gln-821, Glu-833, and Asn-835. Mn(2+)-binding residues include Gln-821, Glu-833, and Asn-835. The MGS-like domain maps to 948-1084 (VRVPHRGTVL…VGISAVQDWV (137 aa)). The allosteric domain stretch occupies residues 948–1084 (VRVPHRGTVL…VGISAVQDWV (137 aa)).

It belongs to the CarB family. Composed of two chains; the small (or glutamine) chain promotes the hydrolysis of glutamine to ammonia, which is used by the large (or ammonia) chain to synthesize carbamoyl phosphate. Tetramer of heterodimers (alpha,beta)4. The cofactor is Mg(2+). Requires Mn(2+) as cofactor.

It catalyses the reaction hydrogencarbonate + L-glutamine + 2 ATP + H2O = carbamoyl phosphate + L-glutamate + 2 ADP + phosphate + 2 H(+). The catalysed reaction is hydrogencarbonate + NH4(+) + 2 ATP = carbamoyl phosphate + 2 ADP + phosphate + 2 H(+). It participates in amino-acid biosynthesis; L-arginine biosynthesis; carbamoyl phosphate from bicarbonate: step 1/1. Its pathway is pyrimidine metabolism; UMP biosynthesis via de novo pathway; (S)-dihydroorotate from bicarbonate: step 1/3. Its function is as follows. Large subunit of the glutamine-dependent carbamoyl phosphate synthetase (CPSase). CPSase catalyzes the formation of carbamoyl phosphate from the ammonia moiety of glutamine, carbonate, and phosphate donated by ATP, constituting the first step of 2 biosynthetic pathways, one leading to arginine and/or urea and the other to pyrimidine nucleotides. The large subunit (synthetase) binds the substrates ammonia (free or transferred from glutamine from the small subunit), hydrogencarbonate and ATP and carries out an ATP-coupled ligase reaction, activating hydrogencarbonate by forming carboxy phosphate which reacts with ammonia to form carbamoyl phosphate. The polypeptide is Carbamoyl phosphate synthase large chain (Symbiobacterium thermophilum (strain DSM 24528 / JCM 14929 / IAM 14863 / T)).